The sequence spans 342 residues: Glucokinase (342 aa).

15–20 (GDVGGT) lines the ATP pocket.

This sequence belongs to the bacterial glucokinase family.

Its subcellular location is the cytoplasm. The enzyme catalyses D-glucose + ATP = D-glucose 6-phosphate + ADP + H(+). The sequence is that of Glucokinase from Ralstonia nicotianae (strain ATCC BAA-1114 / GMI1000) (Ralstonia solanacearum).